A 142-amino-acid polypeptide reads, in one-letter code: Hemoglobin subunit alpha-A (142 aa).

Positions 2-142 (VLSPTDKSIV…VSTVLTSKYR (141 aa)) constitute a Globin domain. His-59 is a binding site for O2. Heme b is bound at residue His-88.

This sequence belongs to the globin family. Heterotetramer of two alpha chains and two beta chains. Red blood cells.

Involved in oxygen transport from the lung to the various peripheral tissues. This Otolemur crassicaudatus (Brown greater galago) protein is Hemoglobin subunit alpha-A (HBAA).